Here is a 342-residue protein sequence, read N- to C-terminus: Cytosolic Fe-S cluster assembly factor NBP35 (342 aa).

The segment at 16–42 is disordered; that stretch reads SKAAPKLVAPEPEHCPGPESEQAGKGD. 4 residues coordinate [4Fe-4S] cluster: Cys30, Cys44, Cys47, and Cys53. 83 to 90 is a binding site for ATP; it reads GKGGVGKS. [4Fe-4S] cluster is bound by residues Cys256 and Cys259.

It belongs to the Mrp/NBP35 ATP-binding proteins family. NUBP1/NBP35 subfamily. Heterotetramer of 2 NBP35 and 2 CFD1 chains. [4Fe-4S] cluster is required as a cofactor.

Its subcellular location is the cytoplasm. Functionally, component of the cytosolic iron-sulfur (Fe/S) protein assembly (CIA) machinery. Required for maturation of extramitochondrial Fe-S proteins. The NBP35-CFD1 heterotetramer forms a Fe-S scaffold complex, mediating the de novo assembly of an Fe-S cluster and its transfer to target apoproteins. This chain is Cytosolic Fe-S cluster assembly factor NBP35, found in Coccidioides immitis (strain RS) (Valley fever fungus).